The following is a 460-amino-acid chain: UDP-glycosyltransferase 91C1 (460 aa).

Residues Thr-283, 335–337 (VPQ), 352–360 (HCGWNSVVE), and 374–377 (LNEQ) contribute to the UDP-alpha-D-glucose site.

Belongs to the UDP-glycosyltransferase family.

This chain is UDP-glycosyltransferase 91C1 (UGT91C1), found in Arabidopsis thaliana (Mouse-ear cress).